Here is a 124-residue protein sequence, read N- to C-terminus: Predicted GPI-anchored protein 11 (124 aa).

Residues 1 to 18 (MKFQFVTALALASTMAVA) form the signal peptide. Residues 38–59 (REGGSTGAELQDNNQPTAGLFG) are disordered. S107 carries GPI-anchor amidated serine lipidation. Residues 108–124 (GAAGGVGNLFSGILGGL) constitute a propeptide, removed in mature form.

It localises to the cell membrane. This Candida albicans (strain SC5314 / ATCC MYA-2876) (Yeast) protein is Predicted GPI-anchored protein 11 (PGA11).